The chain runs to 421 residues: UDP-N-acetylglucosamine 1-carboxyvinyltransferase (421 aa).

Position 26–27 (26–27 (KN)) interacts with phosphoenolpyruvate. Arginine 96 serves as a coordination point for UDP-N-acetyl-alpha-D-glucosamine. Catalysis depends on aspartate 120, which acts as the Proton donor. UDP-N-acetyl-alpha-D-glucosamine contacts are provided by aspartate 308 and valine 330.

This sequence belongs to the EPSP synthase family. MurA subfamily.

It localises to the cytoplasm. It carries out the reaction phosphoenolpyruvate + UDP-N-acetyl-alpha-D-glucosamine = UDP-N-acetyl-3-O-(1-carboxyvinyl)-alpha-D-glucosamine + phosphate. It participates in cell wall biogenesis; peptidoglycan biosynthesis. Functionally, cell wall formation. Adds enolpyruvyl to UDP-N-acetylglucosamine. The protein is UDP-N-acetylglucosamine 1-carboxyvinyltransferase of Corynebacterium efficiens (strain DSM 44549 / YS-314 / AJ 12310 / JCM 11189 / NBRC 100395).